We begin with the raw amino-acid sequence, 476 residues long: Aspartyl/glutamyl-tRNA(Asn/Gln) amidotransferase subunit B (476 aa).

Belongs to the GatB/GatE family. GatB subfamily. As to quaternary structure, heterotrimer of A, B and C subunits.

The catalysed reaction is L-glutamyl-tRNA(Gln) + L-glutamine + ATP + H2O = L-glutaminyl-tRNA(Gln) + L-glutamate + ADP + phosphate + H(+). It catalyses the reaction L-aspartyl-tRNA(Asn) + L-glutamine + ATP + H2O = L-asparaginyl-tRNA(Asn) + L-glutamate + ADP + phosphate + 2 H(+). In terms of biological role, allows the formation of correctly charged Asn-tRNA(Asn) or Gln-tRNA(Gln) through the transamidation of misacylated Asp-tRNA(Asn) or Glu-tRNA(Gln) in organisms which lack either or both of asparaginyl-tRNA or glutaminyl-tRNA synthetases. The reaction takes place in the presence of glutamine and ATP through an activated phospho-Asp-tRNA(Asn) or phospho-Glu-tRNA(Gln). The sequence is that of Aspartyl/glutamyl-tRNA(Asn/Gln) amidotransferase subunit B from Clostridium botulinum (strain Eklund 17B / Type B).